Consider the following 728-residue polypeptide: Homoaconitase, mitochondrial (728 aa).

A mitochondrion-targeting transit peptide spans 1–24 (MVAIPRLARLSVPAWALSARGRFY). Residues cysteine 362, cysteine 422, and cysteine 425 each contribute to the [4Fe-4S] cluster site.

It belongs to the aconitase/IPM isomerase family. The cofactor is [4Fe-4S] cluster.

It localises to the mitochondrion. The catalysed reaction is (2R,3S)-homoisocitrate = cis-homoaconitate + H2O. Its pathway is amino-acid biosynthesis; L-lysine biosynthesis via AAA pathway; L-alpha-aminoadipate from 2-oxoglutarate: step 3/5. In terms of biological role, catalyzes the reversible hydration of cis-homoaconitate to (2R,3S)-homoisocitrate, a step in the alpha-aminoadipate pathway for lysine biosynthesis. This chain is Homoaconitase, mitochondrial (LYS4), found in Cryptococcus neoformans var. neoformans serotype D (strain JEC21 / ATCC MYA-565) (Filobasidiella neoformans).